Reading from the N-terminus, the 177-residue chain is GTP-dependent dephospho-CoA kinase (177 aa).

GTP is bound by residues Gly25, Tyr31, Asp48, Val49, Val50, Asp67, Lys69, Glu124, and Asp147.

The protein belongs to the GTP-dependent DPCK family. In terms of assembly, monomer in solution.

It carries out the reaction 3'-dephospho-CoA + GTP = GDP + CoA + H(+). It functions in the pathway cofactor biosynthesis; coenzyme A biosynthesis. Catalyzes the GTP-dependent phosphorylation of the 3'-hydroxyl group of dephosphocoenzyme A to form coenzyme A (CoA). Can also use UTP, with lower efficiency and has weak activity with ATP, but shows a strong preference for GTP as the phosphate donor. This is GTP-dependent dephospho-CoA kinase from Thermococcus kodakarensis (strain ATCC BAA-918 / JCM 12380 / KOD1) (Pyrococcus kodakaraensis (strain KOD1)).